The chain runs to 622 residues: Membrane protein insertase YidC (622 aa).

The helical transmembrane segment at 6–26 threads the bilayer; sequence IVLLIIFSTSLLFLWDAWVKE. Positions 47–87 are disordered; sequence TQSKNNDGLPIPGSELTASQTGSDLNGIPSSGDTADSVTPR. Positions 62–83 are enriched in polar residues; the sequence is LTASQTGSDLNGIPSSGDTADS. The next 3 helical transmembrane spans lie at 381–401, 451–471, and 525–545; these read WGIA…PLSA, FPIL…LAAV, and PVAF…YSLV. Residues 563-622 are disordered; it reads TAPSQDAPESPASKDAPELPVSNQVINDSENTEAPASGPADSPKKPVNIPRRMHKRTRKK. Polar residues predominate over residues 583–596; the sequence is VSNQVINDSENTEA. The segment covering 613–622 has biased composition (basic residues); it reads RRMHKRTRKK.

This sequence belongs to the OXA1/ALB3/YidC family. Type 1 subfamily. As to quaternary structure, interacts with the Sec translocase complex via SecD. Specifically interacts with transmembrane segments of nascent integral membrane proteins during membrane integration.

It is found in the cell inner membrane. Its function is as follows. Required for the insertion and/or proper folding and/or complex formation of integral membrane proteins into the membrane. Involved in integration of membrane proteins that insert both dependently and independently of the Sec translocase complex, as well as at least some lipoproteins. Aids folding of multispanning membrane proteins. This chain is Membrane protein insertase YidC, found in Nitrosomonas eutropha (strain DSM 101675 / C91 / Nm57).